A 503-amino-acid chain; its full sequence is Maturase K (503 aa).

The protein belongs to the intron maturase 2 family. MatK subfamily.

It is found in the plastid. It localises to the chloroplast. Functionally, usually encoded in the trnK tRNA gene intron. Probably assists in splicing its own and other chloroplast group II introns. This Rosa californica (California wild rose) protein is Maturase K.